The chain runs to 264 residues: MSSEMAYFSGLTDALRLTFVQIMILSTIAIVVFLYGMILNFQKWGAGVTGYALEPQAGSKGSAIRFLKTWWGQVVEESHHGHGKPILEVLILDILFQRRILKRSPLRWFMHFTIFAGWMTLFALSGLMFAVEMTEKFGIELPFTPAEFREFLSIPNYIFGYILLIGVLIALVRRIVVSDVREASIMYDWILIGGVFLVTISGFVADGIRTGIIWGFGLDPTTAPPAALFHSVISLFFCIAYIPYSKYIHVIATPLAILANKGGE.

5 helical membrane-spanning segments follow: residues 19 to 39 (FVQI…GMIL), 109 to 129 (FMHF…GLMF), 151 to 171 (FLSI…LIAL), 185 to 205 (IMYD…GFVA), and 223 to 243 (APPA…AYIP).

Belongs to the HdrE family. In terms of assembly, the dihydromethanophenazine:CoB--CoM heterodisulfide reductase is composed of two subunits; HdrD and HdrE. It depends on heme b as a cofactor.

It is found in the cell membrane. It carries out the reaction methanophenazine + coenzyme B + coenzyme M = dihydromethanophenazine + coenzyme M-coenzyme B heterodisulfide. It participates in cofactor metabolism; coenzyme M-coenzyme B heterodisulfide reduction; coenzyme B and coenzyme M from coenzyme M-coenzyme B heterodisulfide: step 1/1. Part of a complex that catalyzes the reversible reduction of CoM-S-S-CoB to the thiol-coenzymes H-S-CoM (coenzyme M) and H-S-CoB (coenzyme B). HdrE may be responsible for anchoring the complex to the membrane. This chain is Dihydromethanophenazine:CoB--CoM heterodisulfide reductase subunit E (hdrE), found in Methanosarcina acetivorans (strain ATCC 35395 / DSM 2834 / JCM 12185 / C2A).